The chain runs to 300 residues: MPHTDKKQSGLARLLGSASAGIMEIAVFHPVDTISKRLMSNHTKITSGQELNRVIFRDHFSEPLGKRLFTLFPGLGYAASYKVLQRVYKYGGQPFANEFLNKHYKKDFDNLFGEKTGKAMRSAAAGSLIGIGEIVLLPLDVLKIKRQTNPESFKGRGFIKILRDEGLFNLYRGWGWTAARNAPGSFALFGGNAFAKEYILGLKDYSQATWSQNFISSIVGACSSLIVSAPLDVIKTRIQNRNFDNPESGLRIVKNTLKNEGVTAFFKGLTPKLLTTGPKLVFSFALAQSLIPRFDNLLSK.

3 Solcar repeats span residues 8–108, 117–198, and 208–293; these read QSGL…KKDF, GKAM…AKEY, and ATWS…LIPR. Transmembrane regions (helical) follow at residues 14-34, 85-101, 122-142, 173-189, 214-234, and 268-285; these read LLGSASAGIMEIAVFHPVDTI, QRVYKYGGQPFANEFLN, SAAAGSLIGIGEIVLLPLDVL, GWGWTAARNAPGSFALF, FISSIVGACSSLIVSAPLDVI, and GLTPKLLTTGPKLVFSFA.

It belongs to the mitochondrial carrier (TC 2.A.29) family.

The protein localises to the mitochondrion inner membrane. Its function is as follows. Mitochondrial GTP/GDP transporter required for GTP uptake and GDP exit from mitochondria. Involved in mitochondrial iron transport and essential for mitochondrial genome maintenance. This chain is Mitochondrial GTP/GDP carrier protein 1 (GGC1), found in Saccharomyces cerevisiae (strain ATCC 204508 / S288c) (Baker's yeast).